The primary structure comprises 169 residues: Myelin basic protein (169 aa).

A1 is subject to N-acetylalanine. The disordered stretch occupies residues 1–114 (AAQKRPSQRS…GRGLSLSRFS (114 aa)). S7 is subject to Phosphoserine; in C5 and C6. Residue S10 is modified to Phosphoserine. Y12 bears the Phosphotyrosine mark. The residue at position 17 (S17) is a Phosphoserine. Residue T18 is modified to Phosphothreonine. The residue at position 23 (R23) is a Citrulline; in form C8b. R29 is subject to Citrulline. At T33 the chain carries Phosphothreonine. At S38 the chain carries Phosphoserine. R41 is modified (citrulline; alternate). Omega-N-methylarginine; alternate is present on R41. Residues 43 to 87 (FGSDRGAPKRGSGKDGHHAARTTHYGSLPQKAQGHRPQDENPVVH) are induces experimental autoimmune encephalomyelitis (EAE) 1. R47 is modified (citrulline; in form C8b). An Omega-N-methylarginine modification is found at R47. Position 54 is a phosphoserine; in C4, C5 and C6 (S54). R63 bears the Citrulline mark. T65 carries the phosphothreonine modification. A Phosphotyrosine modification is found at Y67. T94 is subject to Phosphothreonine. R96 is subject to Citrulline; in form C2, C3, C8a and C8b. T97 bears the Phosphothreonine; by MAPK; in C3, C4, C5 and C6 mark. Deamidated glutamine; in form C5 is present on Q102. R106 is subject to Citrulline; alternate. R106 is modified (omega-N-methylarginine; alternate). Position 106 is a symmetric dimethylarginine; alternate (R106). The residue at position 112 (R112) is a Citrulline. S114 is subject to Phosphoserine. An induces experimental autoimmune encephalomyelitis (EAE) 2 region spans residues 114–122 (SWGAEGQKP). At Q120 the chain carries Deamidated glutamine; in form C3. N6-acetyllysine is present on K121. Position 129 is a citrulline (R129). The segment at 133 to 169 (YKSAHKGLKGHDAQGTLSKIFKLGGRDSRSGSPMARR) is disordered. Q146 is modified (deamidated glutamine; in form C2). R158 is subject to Citrulline. S160 is modified (phosphoserine; in C4 and C6). Position 161 is a citrulline; in form C3 (R161). S164 bears the Phosphoserine; in form C3, C5 and C6 mark. 2 positions are modified to citrulline: R168 and R169.

It belongs to the myelin basic protein family. As to quaternary structure, homodimer; self-associates in the presence of lysolipid. At least 6 charge isomers; C1 (the most cationic and least modified form), C2, C3, C4, C5 and C6 (the least cationic form); are produced as a result of optional post-translational modifications, such as phosphorylation of serine or threonine residues, deamidation of glutamine or asparagine residues, citrullination and methylation of arginine residues. Post-translationally, phosphorylated by TAOK2, VRK2, MAPK11, MAPK12, MAPK14 and MINK1. In terms of processing, proteolytically cleaved in B cell lysosomes by cathepsin CTSG which degrades the major immunogenic MBP epitope and prevents the activation of MBP-specific autoreactive T cells. In terms of tissue distribution, found in both the central and the peripheral nervous system.

Its subcellular location is the myelin membrane. Its function is as follows. Is, with PLP, the most abundant protein component of the myelin membrane in the CNS. Has a role in both the formation and stabilization of this compact multilayer arrangement of bilayers. Each splice variant and charge isomer may have a specialized function in the assembly of an optimized, biochemically functional myelin membrane. This is Myelin basic protein (MBP) from Bos taurus (Bovine).